Here is a 195-residue protein sequence, read N- to C-terminus: Imidazole glycerol phosphate synthase subunit HisH 2 (195 aa).

The Glutamine amidotransferase type-1 domain occupies 2-195; that stretch reads KIIIIDTACA…LISNFIKDIG (194 aa). Residue Cys-77 is the Nucleophile of the active site. Catalysis depends on residues His-175 and Glu-177.

As to quaternary structure, heterodimer of HisH and HisF.

The protein resides in the cytoplasm. The enzyme catalyses 5-[(5-phospho-1-deoxy-D-ribulos-1-ylimino)methylamino]-1-(5-phospho-beta-D-ribosyl)imidazole-4-carboxamide + L-glutamine = D-erythro-1-(imidazol-4-yl)glycerol 3-phosphate + 5-amino-1-(5-phospho-beta-D-ribosyl)imidazole-4-carboxamide + L-glutamate + H(+). It carries out the reaction L-glutamine + H2O = L-glutamate + NH4(+). Its pathway is amino-acid biosynthesis; L-histidine biosynthesis; L-histidine from 5-phospho-alpha-D-ribose 1-diphosphate: step 5/9. In terms of biological role, IGPS catalyzes the conversion of PRFAR and glutamine to IGP, AICAR and glutamate. The HisH subunit provides the glutamine amidotransferase activity that produces the ammonia necessary to HisF for the synthesis of IGP and AICAR. The polypeptide is Imidazole glycerol phosphate synthase subunit HisH 2 (hisH2) (Campylobacter jejuni subsp. jejuni serotype O:2 (strain ATCC 700819 / NCTC 11168)).